The sequence spans 899 residues: Probable disease resistance protein RXW24L (899 aa).

The stretch at 13–50 (DRLSQEYDQFKGVEDQVTELKSNLNLLKSFLKDADAKK) forms a coiled coil. Positions 143–455 (LQERQREMRH…AEGISERRRY (313 aa)) constitute an NB-ARC domain. Residue 189-196 (GMGGLGKT) coordinates ATP.

The protein belongs to the disease resistance NB-LRR family.

In terms of biological role, potential disease resistance protein. The polypeptide is Probable disease resistance protein RXW24L (RXW24L) (Arabidopsis thaliana (Mouse-ear cress)).